A 106-amino-acid chain; its full sequence is Cytochrome c2 (106 aa).

Residues Cys-19, Cys-22, His-23, and Met-84 each contribute to the heme c site.

The protein belongs to the cytochrome c family. Post-translationally, binds 1 heme c group covalently per subunit.

In Rhodopila globiformis (Rhodopseudomonas globiformis), this protein is Cytochrome c2.